Reading from the N-terminus, the 130-residue chain is Small ribosomal subunit protein uS11 (130 aa).

It belongs to the universal ribosomal protein uS11 family. In terms of assembly, part of the 30S ribosomal subunit. Interacts with proteins S7 and S18. Binds to IF-3.

Located on the platform of the 30S subunit, it bridges several disparate RNA helices of the 16S rRNA. Forms part of the Shine-Dalgarno cleft in the 70S ribosome. The sequence is that of Small ribosomal subunit protein uS11 from Blochmanniella floridana.